A 704-amino-acid polypeptide reads, in one-letter code: Protein arginine N-methyltransferase 7 (704 aa).

SAM-dependent MTase PRMT-type domains follow at residues 14-356 (ENTW…YSLW) and 366-704 (SQPA…EKSE).

This sequence belongs to the class I-like SAM-binding methyltransferase superfamily. Protein arginine N-methyltransferase family. PRMT7 subfamily.

In terms of biological role, essential arginine methyltransferase that can both catalyze the formation of omega-N monomethylarginine (MMA) and symmetrical dimethylarginine (sDMA). Specifically mediates the symmetrical dimethylation of arginine residues in the small nuclear ribonucleoproteins SmD1 and SmD3. The sequence is that of Protein arginine N-methyltransferase 7 (Art7) from Drosophila grimshawi (Hawaiian fruit fly).